Here is a 224-residue protein sequence, read N- to C-terminus: Cytidylate kinase (224 aa).

11-19 (GPAAAGKST) lines the ATP pocket.

The protein belongs to the cytidylate kinase family. Type 1 subfamily.

It localises to the cytoplasm. It carries out the reaction CMP + ATP = CDP + ADP. The enzyme catalyses dCMP + ATP = dCDP + ADP. This chain is Cytidylate kinase (cmk), found in Bacillus subtilis (strain 168).